A 192-amino-acid polypeptide reads, in one-letter code: Transcription antitermination protein NusB (192 aa).

The protein belongs to the NusB family.

Involved in transcription antitermination. Required for transcription of ribosomal RNA (rRNA) genes. Binds specifically to the boxA antiterminator sequence of the ribosomal RNA (rrn) operons. The polypeptide is Transcription antitermination protein NusB (Lactococcus lactis subsp. lactis (strain IL1403) (Streptococcus lactis)).